Reading from the N-terminus, the 956-residue chain is MAM domain-containing glycosylphosphatidylinositol anchor protein 1 (956 aa).

The signal sequence occupies residues 1–18 (MEVTCLLLLALIPFHCRG). Ig-like domains are found at residues 24 to 123 (PAQA…KSIR) and 132 to 230 (PVLT…KSIT). Asparagine 42 is a glycosylation site (N-linked (GlcNAc...) asparagine). Disulfide bonds link cysteine 60/cysteine 108 and cysteine 157/cysteine 214. Residues asparagine 235, asparagine 257, and asparagine 307 are each glycosylated (N-linked (GlcNAc...) asparagine). 4 consecutive Ig-like domains span residues 240–323 (PTLK…KTVN), 338–432 (PDMI…VEVN), 440–534 (PTIS…VQLT), and 539–632 (PEVE…FQVS). 4 disulfide bridges follow: cysteine 262-cysteine 308, cysteine 357-cysteine 415, cysteine 463-cysteine 514, and cysteine 560-cysteine 616. The region spanning 644–744 (TPNPTRSHKL…SRVIHYTEPI (101 aa)) is the Fibronectin type-III domain. One can recognise an MAM domain in the interval 752–919 (NTCHFEDEKI…VTLKKGECPR (168 aa)). Residues 780–789 (LTQNPKRSPN) are compositionally biased toward polar residues. Residues 780–799 (LTQNPKRSPNTGPPTDISGT) are disordered. Serine 933 is lipidated: GPI-anchor amidated serine. A propeptide spans 934–956 (GAPRLSSLQLWGSMTIFLLALQR) (removed in mature form).

In terms of assembly, interacts heterophilically through its MAM domain with proteins in axon-rich regions and through its Ig-like domains with proteins in differentiating muscle. Interacts (through the Ig-like domains) with NLGN2. As to expression, high levels detected in developing central and peripheral nervous systems with little expression elsewhere. In brain, highest levels in cerebral cortex and hindbrain at E15. At postnatal day 1, highest levels in basilar pons and superficial layers of the neocortex. In the developing spinal cord, restricted to a subpopulation of neurons in the dorsal and spinal ventral cord, probably D1 interneurons. Expressed in brain.

It is found in the cell membrane. Functionally, required for radial migration of cortical neurons in the superficial layer of the neocortex. Plays a role in the formation or maintenance of inhibitory synapses. May function by inhibiting the activity of NLGN2. This Rattus norvegicus (Rat) protein is MAM domain-containing glycosylphosphatidylinositol anchor protein 1 (Mdga1).